We begin with the raw amino-acid sequence, 87 residues long: MSASADSLAAAASLDKYGDEDIFSLLIRYGLYVGALFQFVCISAAVLMENNPDVNSNPETGEVTEREGEPVRTRLHKIRKLEKKKRR.

Residues 25 to 47 form a helical membrane-spanning segment; that stretch reads LLIRYGLYVGALFQFVCISAAVL. The interval 52 to 87 is disordered; sequence PDVNSNPETGEVTEREGEPVRTRLHKIRKLEKKKRR. Positions 63–72 are enriched in basic and acidic residues; it reads VTEREGEPVR. Over residues 73–87 the composition is skewed to basic residues; that stretch reads TRLHKIRKLEKKKRR.

This sequence belongs to the UPF0239 family.

The protein resides in the membrane. The polypeptide is Protein anon-73B1 (Drosophila erecta (Fruit fly)).